Here is a 79-residue protein sequence, read N- to C-terminus: Schistosomin (79 aa).

Post-translationally, contains four disulfide bonds. As to expression, growth-controlling neurosecretory light green cells, in the cerebral ganglia of the CNS.

The protein localises to the secreted. Functionally, anti-gonadotropic neuropeptide. It also decreases the binding capacity of calfluxin to membrane-bound receptors of the albumen gland. This leads to inhibition of the reproductive activities of the infected snail. The chain is Schistosomin from Lymnaea stagnalis (Great pond snail).